A 156-amino-acid polypeptide reads, in one-letter code: Protein-export protein SecB (156 aa).

It belongs to the SecB family. In terms of assembly, homotetramer, a dimer of dimers. One homotetramer interacts with 1 SecA dimer.

Its subcellular location is the cytoplasm. Its function is as follows. One of the proteins required for the normal export of preproteins out of the cell cytoplasm. It is a molecular chaperone that binds to a subset of precursor proteins, maintaining them in a translocation-competent state. It also specifically binds to its receptor SecA. The protein is Protein-export protein SecB of Desulfotalea psychrophila (strain LSv54 / DSM 12343).